Here is a 613-residue protein sequence, read N- to C-terminus: Ribosome-associated molecular chaperone SSB (613 aa).

A nucleotide binding domain (NBD) region spans residues 1-391 (MADGVFQGAI…ILTGQSTSDE (391 aa)). ATP contacts are provided by residues 16 to 18 (TTY), lysine 73, 205 to 207 (GGT), 271 to 278 (ERAKRTLS), and glycine 342. Positions 392–402 (TKDLLLLDVAP) are inter-domain linker. The segment at 403–613 (LSLGVGMQGD…RVVTKAMSSR (211 aa)) is substrate binding domain (SBD). Residues 516-612 (SEDIEKMVNQ…KRVVTKAMSS (97 aa)) form a lid domain (SBDalpha) region. The Nuclear export signal signature appears at 574-582 (IEAALADAL).

It belongs to the heat shock protein 70 family. Ssb-type Hsp70 subfamily. In terms of assembly, binds to ribosomes. Binds close to the ribosomal tunnel exit via contacts with both ribosomal proteins and rRNA. Directly interacts with nascent polypeptides. This interaction is dependent on the ribosome-associated complex (RAC). Interacts with SSE1. Interacts with FES1.

The protein localises to the cytoplasm. The catalysed reaction is ATP + H2O = ADP + phosphate + H(+). Functionally, ribosome-bound, Hsp70-type chaperone that assists in the cotranslational folding of newly synthesized proteins in the cytosol. Stimulates folding by interacting with nascent chains, binding to short, largely hydrophobic sequences exposed by unfolded proteins, thereby stabilizing longer, more slowly translated, and aggregation-prone nascent polypeptides and domains that cannot fold stably until fully synthesized. The Hsp70-protein substrate interaction depends on ATP-binding and on allosteric regulation between the NBD and the SBD. The ATP-bound state is characterized by a fast exchange rate of substrate (low affinity state), while in the ADP-bound state exchange is much slower (high affinity state). During the Hsp70 cycle, the chaperone switches between the ATP-bound state (open conformation) and the ADP-bound state (closed conformation) by major conformational rearrangements involving mainly the lid domain. Ssb cooperates with a specific Hsp40/Hsp70 co-chaperone termed the ribosome-associated complex (RAC), which stimulates the ATPase activity of the ribosome-associated pool of Ssbs and switches it to the high affinity substrate binding state. Hsp110 chaperone SSE1 and FES1 act as nucleotide exchange factors that cause substrate release. This Candida glabrata (strain ATCC 2001 / BCRC 20586 / JCM 3761 / NBRC 0622 / NRRL Y-65 / CBS 138) (Yeast) protein is Ribosome-associated molecular chaperone SSB (SSB1).